The chain runs to 491 residues: Probable cytosol aminopeptidase (491 aa).

The Mn(2+) site is built by Lys-260 and Asp-265. Lys-272 is a catalytic residue. Mn(2+)-binding residues include Asp-284, Asp-343, and Glu-345. The active site involves Arg-347.

It belongs to the peptidase M17 family. The cofactor is Mn(2+).

It is found in the cytoplasm. It catalyses the reaction Release of an N-terminal amino acid, Xaa-|-Yaa-, in which Xaa is preferably Leu, but may be other amino acids including Pro although not Arg or Lys, and Yaa may be Pro. Amino acid amides and methyl esters are also readily hydrolyzed, but rates on arylamides are exceedingly low.. The catalysed reaction is Release of an N-terminal amino acid, preferentially leucine, but not glutamic or aspartic acids.. In terms of biological role, presumably involved in the processing and regular turnover of intracellular proteins. Catalyzes the removal of unsubstituted N-terminal amino acids from various peptides. The sequence is that of Probable cytosol aminopeptidase from Trichormus variabilis (strain ATCC 29413 / PCC 7937) (Anabaena variabilis).